We begin with the raw amino-acid sequence, 232 residues long: Sugar fermentation stimulation protein homolog (232 aa).

Belongs to the SfsA family.

The protein is Sugar fermentation stimulation protein homolog of Geobacter sulfurreducens (strain ATCC 51573 / DSM 12127 / PCA).